The following is a 225-amino-acid chain: MAQSDFLYPQNPRRRQEVNRLHQQLLDCLSDSFQVTNKLTGVLNTHLGCRLAFIEMKSDGTIKENCDIIIQAMTKIQKELQKIDEALKDQLEPTLYRKLQDIKERETEKIAIVQKVISVILGEATSAASAVAVKLVGSSVTTGIISKLVSVLAHIGTSLLGSIGVAVLSLGIDMIIQAILGAVERTQLQAAIKSYEKHLEEFKAASAKYHHAITEVATAVKRQLR.

The stretch at 69–92 (IIQAMTKIQKELQKIDEALKDQLE) forms a coiled coil. The helical transmembrane segment at 155–175 (IGTSLLGSIGVAVLSLGIDMI) threads the bilayer. Positions 182–209 (AVERTQLQAAIKSYEKHLEEFKAASAKY) form a coiled coil.

Its subcellular location is the membrane. The protein is Single-pass membrane and coiled-coil domain-containing protein 3 (Smco3) of Mus musculus (Mouse).